The sequence spans 278 residues: Biotin synthase (278 aa).

The Radical SAM core domain occupies 1 to 227; sequence MQIMLCAISN…QSVVMVAGGR (227 aa). [4Fe-4S] cluster contacts are provided by cysteine 16, cysteine 20, and cysteine 23. Residues cysteine 60, asparagine 96, and cysteine 154 each contribute to the [2Fe-2S] cluster site.

Belongs to the radical SAM superfamily. Biotin synthase family. As to quaternary structure, homodimer. Requires [4Fe-4S] cluster as cofactor. [2Fe-2S] cluster is required as a cofactor.

It catalyses the reaction (4R,5S)-dethiobiotin + (sulfur carrier)-SH + 2 reduced [2Fe-2S]-[ferredoxin] + 2 S-adenosyl-L-methionine = (sulfur carrier)-H + biotin + 2 5'-deoxyadenosine + 2 L-methionine + 2 oxidized [2Fe-2S]-[ferredoxin]. It functions in the pathway cofactor biosynthesis; biotin biosynthesis; biotin from 7,8-diaminononanoate: step 2/2. Catalyzes the conversion of dethiobiotin (DTB) to biotin by the insertion of a sulfur atom into dethiobiotin via a radical-based mechanism. The sequence is that of Biotin synthase from Campylobacter jejuni subsp. jejuni serotype O:2 (strain ATCC 700819 / NCTC 11168).